The sequence spans 367 residues: Queuine tRNA-ribosyltransferase (367 aa).

Aspartate 91 acts as the Proton acceptor in catalysis. Substrate-binding positions include 91–95, aspartate 145, glutamine 188, and glycine 215; that span reads DSGGF. The active-site Nucleophile is the aspartate 265. Positions 270-274 are RNA binding; important for wobble base 34 recognition; sequence TRVAR. Cysteine 303, cysteine 305, cysteine 308, and histidine 334 together coordinate Zn(2+).

The protein belongs to the queuine tRNA-ribosyltransferase family. Homodimer. Within each dimer, one monomer is responsible for RNA recognition and catalysis, while the other monomer binds to the replacement base PreQ1. Requires Zn(2+) as cofactor.

It catalyses the reaction 7-aminomethyl-7-carbaguanine + guanosine(34) in tRNA = 7-aminomethyl-7-carbaguanosine(34) in tRNA + guanine. It participates in tRNA modification; tRNA-queuosine biosynthesis. In terms of biological role, catalyzes the base-exchange of a guanine (G) residue with the queuine precursor 7-aminomethyl-7-deazaguanine (PreQ1) at position 34 (anticodon wobble position) in tRNAs with GU(N) anticodons (tRNA-Asp, -Asn, -His and -Tyr). Catalysis occurs through a double-displacement mechanism. The nucleophile active site attacks the C1' of nucleotide 34 to detach the guanine base from the RNA, forming a covalent enzyme-RNA intermediate. The proton acceptor active site deprotonates the incoming PreQ1, allowing a nucleophilic attack on the C1' of the ribose to form the product. After dissociation, two additional enzymatic reactions on the tRNA convert PreQ1 to queuine (Q), resulting in the hypermodified nucleoside queuosine (7-(((4,5-cis-dihydroxy-2-cyclopenten-1-yl)amino)methyl)-7-deazaguanosine). This Thermosipho africanus (strain TCF52B) protein is Queuine tRNA-ribosyltransferase.